Here is a 102-residue protein sequence, read N- to C-terminus: Keratinocyte differentiation-associated protein (102 aa).

The signal sequence occupies residues 1 to 22 (MKIPILPVVALLSLLALHAVQG).

In terms of tissue distribution, expression restricted to suprabasal keratinocytes of the epidermis.

The protein localises to the secreted. Its function is as follows. May act as a soluble regulator of keratinocyte differentiation. May play an important role in embryonic skin morphogenesis. The sequence is that of Keratinocyte differentiation-associated protein from Mus musculus (Mouse).